We begin with the raw amino-acid sequence, 348 residues long: NADH-ubiquinone oxidoreductase chain 2 (348 aa).

10 helical membrane-spanning segments follow: residues 3 to 23 (PIII…VLMS), 25 to 45 (HWFM…PVLM), 59 to 79 (YFLT…INLI), 93 to 115 (TAST…HFWV), 149 to 169 (LNMT…GWGG), 178 to 198 (ILAF…MFNP), 201 to 221 (TLLN…ILIF), 239 to 259 (IMTV…PLSG), 276 to 296 (IALA…YMRL), and 326 to 346 (LPTL…MMML).

Belongs to the complex I subunit 2 family. As to quaternary structure, core subunit of respiratory chain NADH dehydrogenase (Complex I) which is composed of 45 different subunits. Interacts with TMEM242.

The protein resides in the mitochondrion inner membrane. It catalyses the reaction a ubiquinone + NADH + 5 H(+)(in) = a ubiquinol + NAD(+) + 4 H(+)(out). Core subunit of the mitochondrial membrane respiratory chain NADH dehydrogenase (Complex I) which catalyzes electron transfer from NADH through the respiratory chain, using ubiquinone as an electron acceptor. Essential for the catalytic activity and assembly of complex I. The chain is NADH-ubiquinone oxidoreductase chain 2 from Thyroptera tricolor (Spix's disk-winged bat).